A 126-amino-acid chain; its full sequence is Small ribosomal subunit protein uS12 (126 aa).

Position 89 is a 3-methylthioaspartic acid (Asp-89). Residues 99–126 form a disordered region; the sequence is RGSLDTSGVNDRKQGRSKYGTKKPKDKK. The span at 113-126 shows a compositional bias: basic residues; sequence GRSKYGTKKPKDKK.

It belongs to the universal ribosomal protein uS12 family. As to quaternary structure, part of the 30S ribosomal subunit. Contacts proteins S8 and S17. May interact with IF1 in the 30S initiation complex.

In terms of biological role, with S4 and S5 plays an important role in translational accuracy. Functionally, interacts with and stabilizes bases of the 16S rRNA that are involved in tRNA selection in the A site and with the mRNA backbone. Located at the interface of the 30S and 50S subunits, it traverses the body of the 30S subunit contacting proteins on the other side and probably holding the rRNA structure together. The combined cluster of proteins S8, S12 and S17 appears to hold together the shoulder and platform of the 30S subunit. The protein is Small ribosomal subunit protein uS12 of Legionella pneumophila (strain Paris).